Reading from the N-terminus, the 1402-residue chain is DNA-directed RNA polymerase subunit beta' (1402 aa).

Zn(2+) contacts are provided by C72, C74, C87, and C90. The Mg(2+) site is built by D463, D465, and D467. Zn(2+) is bound by residues C811, C885, C892, and C895.

This sequence belongs to the RNA polymerase beta' chain family. As to quaternary structure, the RNAP catalytic core consists of 2 alpha, 1 beta, 1 beta' and 1 omega subunit. When a sigma factor is associated with the core the holoenzyme is formed, which can initiate transcription. It depends on Mg(2+) as a cofactor. The cofactor is Zn(2+).

The catalysed reaction is RNA(n) + a ribonucleoside 5'-triphosphate = RNA(n+1) + diphosphate. DNA-dependent RNA polymerase catalyzes the transcription of DNA into RNA using the four ribonucleoside triphosphates as substrates. This chain is DNA-directed RNA polymerase subunit beta', found in Paracoccus denitrificans (strain Pd 1222).